The sequence spans 390 residues: Histamine H4 receptor (390 aa).

The Extracellular portion of the chain corresponds to Met1 to Ala19. N-linked (GlcNAc...) asparagine glycosylation is found at Asn5 and Asn9. A helical membrane pass occupies residues Phe20–Phe40. The Cytoplasmic portion of the chain corresponds to Val41 to Tyr52. The helical transmembrane segment at Phe53 to Ile73 threads the bilayer. Topologically, residues Pro74–Cys87 are extracellular. An intrachain disulfide couples Cys87 to Cys164. Residues Val88 to Ile108 traverse the membrane as a helical segment. At Ser109–Lys131 the chain is on the cytoplasmic side. A helical transmembrane segment spans residues Ile132–Leu152. Residues Val153–Trp172 are Extracellular-facing. The chain crosses the membrane as a helical span at residues Tyr173–Phe193. Residues Asn194–Ser304 are Cytoplasmic-facing. The helical transmembrane segment at Leu305–Val325 threads the bilayer. At Leu326–Arg341 the chain is on the extracellular side. Residues Ile342–His362 form a helical membrane-spanning segment. The Cytoplasmic segment spans residues Lys363–Ser390.

This sequence belongs to the G-protein coupled receptor 1 family. Interacts with TSPAN4. In terms of tissue distribution, expressed primarily in the bone marrow and eosinophils. Shows preferential distribution in cells of immunological relevance such as T-cells, dendritic cells, monocytes, mast cells, neutrophils. Also expressed in a wide variety of peripheral tissues, including the heart, kidney, liver, lung, pancreas, skeletal muscle, prostate, small intestine, spleen, testis, colon, fetal liver and lymph node.

Its subcellular location is the cell membrane. Its function is as follows. The H4 subclass of histamine receptors could mediate the histamine signals in peripheral tissues. Displays a significant level of constitutive activity (spontaneous activity in the absence of agonist). This Homo sapiens (Human) protein is Histamine H4 receptor (HRH4).